Here is a 257-residue protein sequence, read N- to C-terminus: tRNA-cytidine(32) 2-sulfurtransferase (257 aa).

The PP-loop motif motif lies at 37–42 (SGGKDS). [4Fe-4S] cluster contacts are provided by Cys-112, Cys-115, and Cys-202.

Belongs to the TtcA family. In terms of assembly, homodimer. The cofactor is Mg(2+). Requires [4Fe-4S] cluster as cofactor.

The protein resides in the cytoplasm. The catalysed reaction is cytidine(32) in tRNA + S-sulfanyl-L-cysteinyl-[cysteine desulfurase] + AH2 + ATP = 2-thiocytidine(32) in tRNA + L-cysteinyl-[cysteine desulfurase] + A + AMP + diphosphate + H(+). It participates in tRNA modification. In terms of biological role, catalyzes the ATP-dependent 2-thiolation of cytidine in position 32 of tRNA, to form 2-thiocytidine (s(2)C32). The sulfur atoms are provided by the cysteine/cysteine desulfurase (IscS) system. This is tRNA-cytidine(32) 2-sulfurtransferase from Geobacter sulfurreducens (strain ATCC 51573 / DSM 12127 / PCA).